The chain runs to 67 residues: UPF0337 protein BCE_3655 (67 aa).

This sequence belongs to the UPF0337 (CsbD) family.

The protein is UPF0337 protein BCE_3655 of Bacillus cereus (strain ATCC 10987 / NRS 248).